The sequence spans 368 residues: Ribosomal RNA large subunit methyltransferase M (368 aa).

Residues Ser189, 222 to 225 (CPGG), Asp241, Asp261, and Asp278 each bind S-adenosyl-L-methionine. Lys307 serves as the catalytic Proton acceptor.

This sequence belongs to the class I-like SAM-binding methyltransferase superfamily. RNA methyltransferase RlmE family. RlmM subfamily. In terms of assembly, monomer.

The protein localises to the cytoplasm. The catalysed reaction is cytidine(2498) in 23S rRNA + S-adenosyl-L-methionine = 2'-O-methylcytidine(2498) in 23S rRNA + S-adenosyl-L-homocysteine + H(+). Its function is as follows. Catalyzes the 2'-O-methylation at nucleotide C2498 in 23S rRNA. The chain is Ribosomal RNA large subunit methyltransferase M from Yersinia pestis bv. Antiqua (strain Angola).